Here is a 368-residue protein sequence, read N- to C-terminus: DNA replication and repair protein RecF (368 aa).

30–37 provides a ligand contact to ATP; the sequence is GNNAQGKT.

The protein belongs to the RecF family.

Its subcellular location is the cytoplasm. Its function is as follows. The RecF protein is involved in DNA metabolism; it is required for DNA replication and normal SOS inducibility. RecF binds preferentially to single-stranded, linear DNA. It also seems to bind ATP. The protein is DNA replication and repair protein RecF of Streptococcus pyogenes serotype M4 (strain MGAS10750).